Reading from the N-terminus, the 215-residue chain is Oligoribonuclease (215 aa).

One can recognise an Exonuclease domain in the interval 5-170 (LVWIDCEMTG…ADIHESIREL (166 aa)). Residue Tyr127 is part of the active site. Residues 196-215 (LDEGKDAPGPSDSASAPPTG) form a disordered region. Over residues 202–215 (APGPSDSASAPPTG) the composition is skewed to low complexity.

It belongs to the oligoribonuclease family.

It is found in the cytoplasm. In terms of biological role, 3'-to-5' exoribonuclease specific for small oligoribonucleotides. The protein is Oligoribonuclease of Mycobacterium avium (strain 104).